The sequence spans 478 residues: 7-dehydrocholesterol reductase (478 aa).

The disordered stretch occupies residues M1–E28. The next 6 helical transmembrane spans lie at L43–A63, W97–V117, W180–I200, V269–W289, L309–V329, and I333–I353. NADP(+) is bound by residues K361, R365, M398, W403, and N410 to Y411. Residues A424–V444 form a helical membrane-spanning segment. Residues D450, C454–Y458, and Y465 each bind NADP(+).

Belongs to the ERG4/ERG24 family.

The protein localises to the endoplasmic reticulum membrane. It catalyses the reaction cholesterol + NADP(+) = 7-dehydrocholesterol + NADPH + H(+). The enzyme catalyses 7-dehydrodesmosterol + NADPH + H(+) = desmosterol + NADP(+). The protein operates within steroid biosynthesis; cholesterol biosynthesis. Its function is as follows. Catalyzes the last step of the cholesterol synthesis pathway, which transforms cholesta-5,7-dien-3beta-ol (7-dehydrocholesterol,7-DHC) into cholesterol by reducing the C7-C8 double bond of its sterol core. Can also metabolize cholesta-5,7,24-trien-3beta-ol (7-dehydrodemosterol, 7-DHD) to desmosterol, which is then metabolized by the Delta(24)-sterol reductase (DHCR24) to cholesterol. Modulates ferroptosis (a form of regulated cell death driven by iron-dependent lipid peroxidation) through the metabolic breakdown of the anti-ferroptotic metabolites 7-DHC and 7-DHD which, when accumulated, divert the propagation of peroxyl radical-mediated damage from phospholipid components to its sterol core, protecting plasma and mitochondrial membranes from phospholipid autoxidation. This is 7-dehydrocholesterol reductase (dhcr7) from Danio rerio (Zebrafish).